Here is a 157-residue protein sequence, read N- to C-terminus: NudC domain-containing protein 2 (157 aa).

At Ser2 the chain carries N-acetylserine. One can recognise a CS domain in the interval 14 to 104 (CGTPWGQWYQ…DAANCWTSLL (91 aa)). The interval 134 to 157 (FDFSGAEISGNYTKGGPDFSNLEK) is disordered. Ser142 carries the post-translational modification Phosphoserine. Tyr145 is subject to Phosphotyrosine.

Interacts with LIS1.

It localises to the chromosome. The protein resides in the centromere. It is found in the kinetochore. The protein localises to the cytoplasm. Its subcellular location is the cytoskeleton. It localises to the microtubule organizing center. The protein resides in the centrosome. It is found in the spindle pole. In terms of biological role, may regulate the LIS1/dynein pathway by stabilizing LIS1 with Hsp90 chaperone. The polypeptide is NudC domain-containing protein 2 (NUDCD2) (Homo sapiens (Human)).